A 103-amino-acid polypeptide reads, in one-letter code: UPF0145 protein CYA_2258 (103 aa).

Belongs to the UPF0145 family.

In Synechococcus sp. (strain JA-3-3Ab) (Cyanobacteria bacterium Yellowstone A-Prime), this protein is UPF0145 protein CYA_2258.